Here is a 271-residue protein sequence, read N- to C-terminus: Putative pyruvate, phosphate dikinase regulatory protein (271 aa).

151–158 (GISRTSKT) is a binding site for ADP.

This sequence belongs to the pyruvate, phosphate/water dikinase regulatory protein family. PDRP subfamily.

The catalysed reaction is N(tele)-phospho-L-histidyl/L-threonyl-[pyruvate, phosphate dikinase] + ADP = N(tele)-phospho-L-histidyl/O-phospho-L-threonyl-[pyruvate, phosphate dikinase] + AMP + H(+). The enzyme catalyses N(tele)-phospho-L-histidyl/O-phospho-L-threonyl-[pyruvate, phosphate dikinase] + phosphate + H(+) = N(tele)-phospho-L-histidyl/L-threonyl-[pyruvate, phosphate dikinase] + diphosphate. Its function is as follows. Bifunctional serine/threonine kinase and phosphorylase involved in the regulation of the pyruvate, phosphate dikinase (PPDK) by catalyzing its phosphorylation/dephosphorylation. The chain is Putative pyruvate, phosphate dikinase regulatory protein from Streptococcus uberis (strain ATCC BAA-854 / 0140J).